Reading from the N-terminus, the 343-residue chain is Probable transcription factor MYB58 (343 aa).

The interval 1–30 (MARAPGGVRRRSGRRGAGGGGAGGGGEALR) is disordered. A compositionally biased stretch (gly residues) spans 15 to 27 (RGAGGGGAGGGGE). 2 consecutive HTH myb-type domains span residues 26-78 (GEAL…VNKL) and 79-134 (RPNL…KRLA). 2 DNA-binding regions (H-T-H motif) span residues 54 to 77 (WSSIRSKGLLPRTGKSCRLRWVNK) and 107 to 130 (WARIATYLQGRTDNDVKNFWSTRQ). Disordered regions lie at residues 137 to 169 (LRGPLPAARPNKHNSGKGKAPSSSSLDSQTATF), 219 to 238 (PPADGEASSSNAAQSAPPPL), and 307 to 343 (DDLPPNMFDDAVDQPPPPPPPPPPPSPSPSPSRDDVL). Residues 157 to 169 (PSSSSLDSQTATF) are compositionally biased toward polar residues. Over residues 320–336 (QPPPPPPPPPPPSPSPS) the composition is skewed to pro residues.

It is found in the nucleus. Probable transcription factor. This is Probable transcription factor MYB58 from Oryza sativa subsp. japonica (Rice).